Here is a 115-residue protein sequence, read N- to C-terminus: Large ribosomal subunit protein eL30 (115 aa).

Ser-10 and Ser-16 each carry phosphoserine. Lys-26 carries the post-translational modification N6-acetyllysine; alternate. Residue Lys-26 forms a Glycyl lysine isopeptide (Lys-Gly) (interchain with G-Cter in SUMO2); alternate linkage.

Belongs to the eukaryotic ribosomal protein eL30 family. Component of the large ribosomal subunit.

Its subcellular location is the cytoplasm. Its function is as follows. Component of the large ribosomal subunit. The ribosome is a large ribonucleoprotein complex responsible for the synthesis of proteins in the cell. The polypeptide is Large ribosomal subunit protein eL30 (RPL30) (Homo sapiens (Human)).